The primary structure comprises 250 residues: Proteasome subunit alpha (250 aa).

Belongs to the peptidase T1A family. As to quaternary structure, the 20S proteasome core is composed of 14 alpha and 14 beta subunits that assemble into four stacked heptameric rings, resulting in a barrel-shaped structure. The two inner rings, each composed of seven catalytic beta subunits, are sandwiched by two outer rings, each composed of seven alpha subunits. The catalytic chamber with the active sites is on the inside of the barrel. Has a gated structure, the ends of the cylinder being occluded by the N-termini of the alpha-subunits. Is capped by the proteasome-associated ATPase, ARC.

It is found in the cytoplasm. It functions in the pathway protein degradation; proteasomal Pup-dependent pathway. With respect to regulation, the formation of the proteasomal ATPase ARC-20S proteasome complex, likely via the docking of the C-termini of ARC into the intersubunit pockets in the alpha-rings, may trigger opening of the gate for substrate entry. Interconversion between the open-gate and close-gate conformations leads to a dynamic regulation of the 20S proteasome proteolysis activity. Functionally, component of the proteasome core, a large protease complex with broad specificity involved in protein degradation. The protein is Proteasome subunit alpha of Mycobacterium sp. (strain JLS).